Consider the following 308-residue polypeptide: MISRFFRHLFEALKSLKRNGWMTVAAVSSVMITLTLVAIFASVIFNTAKLATDIENNVRVVVYIRKDVEDNSQTIEKEGQTVTNNDYHKVYDSLKNMSTVKSVTFSSKEEQYEKLTEIMGDNWKIFEGDANPLYDAYIVEANAPNDVKTIAEDAKKIEGVSEVQDGGANTERLFKLASFIRVWGLGIAALLIFIAAFLISNTIRITIISRSREIQIMRLVGAKNSYIRGPFLLEGAFIGLLGAIAPSVLVFIVYQIVYQSVNKSLVGQNLSMISPDLFSPLMIALLFVIGVFIGSLGSGISMRRFLKI.

Topologically, residues methionine 1–valine 24 are extracellular. Residues alanine 25 to phenylalanine 45 form a helical membrane-spanning segment. Residues asparagine 46–serine 178 lie on the Cytoplasmic side of the membrane. Residues phenylalanine 179–isoleucine 199 traverse the membrane as a helical segment. The Extracellular segment spans residues serine 200 to alanine 236. The helical transmembrane segment at phenylalanine 237–valine 257 threads the bilayer. Residues tyrosine 258 to aspartate 276 lie on the Cytoplasmic side of the membrane. The chain crosses the membrane as a helical span at residues leucine 277–glycine 297. The Extracellular segment spans residues serine 298–isoleucine 308.

The protein belongs to the ABC-4 integral membrane protein family. FtsX subfamily. As to quaternary structure, interacts with FtsE. Interacts (via large extracellular loop) with PcsB (via N-terminal coiled coil domain). This interaction directs PcsB to equatorial and septal sites of dividing cells.

The protein resides in the cell membrane. In terms of biological role, part of the ABC transporter FtsEX involved in asymmetric cellular division facilitating the initiation of sporulation. Required in maintaining normal growth and cellular morphology. The chain is Cell division protein FtsX from Streptococcus pneumoniae (strain ATCC BAA-255 / R6).